The chain runs to 952 residues: ALS2 C-terminal-like protein (952 aa).

MORN repeat units follow at residues 358 to 380 (YDGE…DGRN), 381 to 403 (HVGT…QASE), 409 to 431 (YKCH…TDEV), 432 to 454 (YKGY…PQAP), 459 to 481 (YTGH…DRGE), 483 to 505 (YIGM…AGVC), 506 to 528 (YQGT…DDSL), and 529 to 552 (YEGT…NGFT). The VPS9 domain occupies 795–941 (LFPDTKLLEF…IQKEDMRPHH (147 aa)).

As to quaternary structure, homodimer. Forms a heteromeric complex with ALS2. Interacts with ALS2 and RAB5A. Expressed in heart, lung, liver and kidney.

It is found in the cytoplasm. In terms of biological role, acts as a guanine nucleotide exchange factor (GEF) for Rab5 GTPase. Regulates the ALS2-mediated endosome dynamics. The chain is ALS2 C-terminal-like protein (Als2cl) from Mus musculus (Mouse).